Here is a 100-residue protein sequence, read N- to C-terminus: MIPLTHGLILAAILFVLGLTGLVIRRNLLFMLISLEIMINAAALAFVVAGSYWGQADGQIMYILAISLAAAEASIGLALLLQLHRRRQNLNIDSVSELRG.

The next 3 membrane-spanning stretches (helical) occupy residues 4-24, 28-48, and 60-80; these read LTHG…GLVI, LLFM…AFVV, and IMYI…LALL.

It belongs to the complex I subunit 4L family. As to quaternary structure, NDH-1 is composed of 13 different subunits. Subunits NuoA, H, J, K, L, M, N constitute the membrane sector of the complex.

Its subcellular location is the cell inner membrane. It carries out the reaction a quinone + NADH + 5 H(+)(in) = a quinol + NAD(+) + 4 H(+)(out). In terms of biological role, NDH-1 shuttles electrons from NADH, via FMN and iron-sulfur (Fe-S) centers, to quinones in the respiratory chain. The immediate electron acceptor for the enzyme in this species is believed to be ubiquinone. Couples the redox reaction to proton translocation (for every two electrons transferred, four hydrogen ions are translocated across the cytoplasmic membrane), and thus conserves the redox energy in a proton gradient. This Klebsiella pneumoniae (strain 342) protein is NADH-quinone oxidoreductase subunit K.